Here is a 34-residue protein sequence, read N- to C-terminus: Antimicrobial peptide Alo-1 (34 aa).

Disulfide bonds link Cys-1-Cys-18, Cys-8-Cys-22, and Cys-17-Cys-33.

The protein localises to the secreted. Its function is as follows. Has antifungal activity against C.glabrata. This Acrocinus longimanus (Giant harlequin beetle) protein is Antimicrobial peptide Alo-1.